Consider the following 62-residue polypeptide: Large ribosomal subunit protein uL30 (62 aa).

Belongs to the universal ribosomal protein uL30 family. As to quaternary structure, part of the 50S ribosomal subunit.

The chain is Large ribosomal subunit protein uL30 from Cereibacter sphaeroides (strain ATCC 17029 / ATH 2.4.9) (Rhodobacter sphaeroides).